A 1295-amino-acid polypeptide reads, in one-letter code: Protein FORGETTER 1 (1295 aa).

Composition is skewed to pro residues over residues 1 to 14 (MTQS…PLPA), 75 to 89 (PQQP…PPPI), and 162 to 177 (PPTP…PPPE). 4 disordered regions span residues 1–20 (MTQS…HSAA), 68–107 (RPQF…PAHG), 153–204 (LTAS…MDYR), and 626–688 (PEQP…NDSD). Acidic residues predominate over residues 178–193 (EVNEEAIEVEREEDEG). The Nuclear localization signal signature appears at 643-650 (RKRHSASP). A compositionally biased stretch (acidic residues) spans 669 to 688 (DNESDLESEADSADDSNDSD). A PHD-type zinc finger spans residues 691–741 (FQICQICSGEDERKKLLHCSECDKLFHPDCVVPPVIDLPSEAWICFSCKEK).

The protein belongs to the SBNO family. Interacts with SWI/SNF and ISWI chromatin remodelers such as BRM, CHR11 and CHR17. Binds to histone H3.

It localises to the nucleus. Functionally, required for normal embryo development. Necessary to acquire heat stress (HS) memory, by modulating nucleosome occupancy and regulating heat-induced gene expression. Associates globally with the nucleosome-poor regions flanking the transcription units of expressed genes. Binds to the promoter regions, primarily to the proximal promoter just upstream of the transcriptional start sites (TSS) and somewhat more weakly to the region downstream of the transcription termination site (TTS), of actively expressed genes (e.g. HSA32, HSP18.2 and HSP22.0) in a heat-dependent fashion. In Arabidopsis thaliana (Mouse-ear cress), this protein is Protein FORGETTER 1.